A 639-amino-acid polypeptide reads, in one-letter code: Chaperone protein DnaK (639 aa).

Phosphothreonine; by autocatalysis is present on threonine 197. Composition is skewed to basic and acidic residues over residues 514–529 and 540–553; these read AEENAEADKDRKDLVE and GTEKSLEEHGEKVD. Disordered stretches follow at residues 514 to 554 and 603 to 639; these read AEEN…KVDP and DKAEAAQDGAPEEEERGVDEDIVDADFEDLDDDRKRG. Over residues 612-633 the composition is skewed to acidic residues; it reads APEEEERGVDEDIVDADFEDLD.

This sequence belongs to the heat shock protein 70 family.

In terms of biological role, acts as a chaperone. The protein is Chaperone protein DnaK of Jannaschia sp. (strain CCS1).